The chain runs to 310 residues: Lipoyl synthase (310 aa).

Residues Cys54, Cys59, Cys65, Cys80, Cys84, Cys87, and Ser295 each coordinate [4Fe-4S] cluster. Positions 66–284 (FASGTATFLI…LFGEDNLGFM (219 aa)) constitute a Radical SAM core domain.

It belongs to the radical SAM superfamily. Lipoyl synthase family. It depends on [4Fe-4S] cluster as a cofactor.

It localises to the cytoplasm. It carries out the reaction [[Fe-S] cluster scaffold protein carrying a second [4Fe-4S](2+) cluster] + N(6)-octanoyl-L-lysyl-[protein] + 2 oxidized [2Fe-2S]-[ferredoxin] + 2 S-adenosyl-L-methionine + 4 H(+) = [[Fe-S] cluster scaffold protein] + N(6)-[(R)-dihydrolipoyl]-L-lysyl-[protein] + 4 Fe(3+) + 2 hydrogen sulfide + 2 5'-deoxyadenosine + 2 L-methionine + 2 reduced [2Fe-2S]-[ferredoxin]. The protein operates within protein modification; protein lipoylation via endogenous pathway; protein N(6)-(lipoyl)lysine from octanoyl-[acyl-carrier-protein]: step 2/2. Catalyzes the radical-mediated insertion of two sulfur atoms into the C-6 and C-8 positions of the octanoyl moiety bound to the lipoyl domains of lipoate-dependent enzymes, thereby converting the octanoylated domains into lipoylated derivatives. This chain is Lipoyl synthase, found in Prochlorococcus marinus (strain MIT 9215).